The following is a 315-amino-acid chain: Transaldolase (315 aa).

The active-site Schiff-base intermediate with substrate is the Lys131.

The protein belongs to the transaldolase family. Type 1 subfamily. Homodimer.

The protein localises to the cytoplasm. It carries out the reaction D-sedoheptulose 7-phosphate + D-glyceraldehyde 3-phosphate = D-erythrose 4-phosphate + beta-D-fructose 6-phosphate. It participates in carbohydrate degradation; pentose phosphate pathway; D-glyceraldehyde 3-phosphate and beta-D-fructose 6-phosphate from D-ribose 5-phosphate and D-xylulose 5-phosphate (non-oxidative stage): step 2/3. Its function is as follows. Transaldolase is important for the balance of metabolites in the pentose-phosphate pathway. The protein is Transaldolase of Actinobacillus pleuropneumoniae serotype 3 (strain JL03).